We begin with the raw amino-acid sequence, 319 residues long: Aspartate carbamoyltransferase catalytic subunit (319 aa).

The carbamoyl phosphate site is built by arginine 65 and threonine 66. Lysine 93 is a binding site for L-aspartate. 3 residues coordinate carbamoyl phosphate: arginine 115, histidine 149, and glutamine 152. Positions 182 and 237 each coordinate L-aspartate. Positions 278 and 279 each coordinate carbamoyl phosphate.

It belongs to the aspartate/ornithine carbamoyltransferase superfamily. ATCase family. Heterododecamer (2C3:3R2) of six catalytic PyrB chains organized as two trimers (C3), and six regulatory PyrI chains organized as three dimers (R2).

The catalysed reaction is carbamoyl phosphate + L-aspartate = N-carbamoyl-L-aspartate + phosphate + H(+). Its pathway is pyrimidine metabolism; UMP biosynthesis via de novo pathway; (S)-dihydroorotate from bicarbonate: step 2/3. Catalyzes the condensation of carbamoyl phosphate and aspartate to form carbamoyl aspartate and inorganic phosphate, the committed step in the de novo pyrimidine nucleotide biosynthesis pathway. In Azoarcus sp. (strain BH72), this protein is Aspartate carbamoyltransferase catalytic subunit.